We begin with the raw amino-acid sequence, 453 residues long: Vitamin D3 receptor A (453 aa).

Residues 53–128 (PRICGVCGDK…IGMMKEFILT (76 aa)) constitute a DNA-binding region (nuclear receptor). 8 residues coordinate Zn(2+): C56, C59, C73, C76, C92, C98, C108, and C111. 2 NR C4-type zinc fingers span residues 56–76 (CGVC…CEGC) and 92–111 (CPFN…CQAC). Residues 129–158 (DEEVQRKKDLIMKRKEEEAAREARKPRLSD) are hinge. One can recognise an NR LBD domain in the interval 159–449 (EQMQIINSLV…LTPLVLEVFG (291 aa)). 2 residues coordinate calcitriol: Y175 and S265. Positions 274–292 (KMIPGFRDLTAEDQIALLK) are interaction with coactivator LXXLL motif. Positions 302, 306, 333, and 423 each coordinate calcitriol. A 9aaTAD motif is present at residues 442–450 (PLVLEVFGS).

It belongs to the nuclear hormone receptor family. NR1 subfamily. Homodimer in the absence of bound vitamin D3. Heterodimer with RXRA after vitamin D3 binding. Interacts with ncoa1 and possibly other coactivators, leading to a strong increase of transcription of target genes. In terms of tissue distribution, detected in embryo 24 to 48 hours after fertilization and in gastrula.

The protein localises to the nucleus. It localises to the cytoplasm. Its function is as follows. Nuclear receptor for calcitriol, the active form of vitamin D3 which mediates the action of this vitamin on cells. Enters the nucleus upon vitamin D3 binding where it forms heterodimers with the retinoid X receptor/RXR. The VDR-RXR heterodimers bind to specific response elements on DNA and activate the transcription of vitamin D3-responsive target genes. Recruited to promoters via its interaction with BAZ1B/WSTF which mediates the interaction with acetylated histones, an essential step for VDR-promoter association. Plays a central role in calcium homeostasis. In Danio rerio (Zebrafish), this protein is Vitamin D3 receptor A (vdra).